Reading from the N-terminus, the 536-residue chain is MSGASSGTATGARLFGISSVLGEYRVLIGDEGAGPSRSPSEVSFSVWYRSRAARLVILCLVASFLVPCLTFLIAETVMGQTVTTPPSLTLDHWSEVRTRAHNQGIEVRKKKWITLCEAEWVMMNVGWPREGTPPLDNTSQVEKRIFAPGPHGHPDQVPYITTWRSLATDPPSWVRPFLPPPKPPTPLPQPLSPQPSAPPTSSLYPVLPKTNPPKPPVLPPDPSSPLIDLLTEEPPPYPGGHGPPPSGLRTPAASPIASRLRERRENPAEESQALPLREGPNNRPQYWPFSASDLYNWKLHNPPFSQDPVALTNLIESILVTHQPTWDDCQQLLQALLTAEERQRVLLEARKQVPGEDGRPTQLPNVIDEAFPLTRPNWDFATPAGREHLRLYRQLLLAGLRGAARRPTNLAQVKQVVQGKEETPASFLERLKEAYRMYTPYDPEDPGQAASVILSFIYQSSPDIRNKLQRLEGLQGFTLSDLLKEAEKIYNKRETPEEREERLWQRQEERDKKRHKEMTKVLATVVTQNRNKDREE.

Topologically, residues 1–54 (MSGASSGTATGARLFGISSVLGEYRVLIGDEGAGPSRSPSEVSFSVWYRSRAAR) are cytoplasmic. The chain crosses the membrane as a helical span at residues 55–75 (LVILCLVASFLVPCLTFLIAE). At 76 to 536 (TVMGQTVTTP…TQNRNKDREE (461 aa)) the chain is on the extracellular side. An N-linked (GlcNAc...) asparagine; by host glycan is attached at Asn-137. Disordered stretches follow at residues 174–284 (VRPF…NNRP) and 494–536 (ETPE…DREE). Positions 177 to 198 (FLPPPKPPTPLPQPLSPQPSAP) are enriched in pro residues. Positions 199 to 209 (PTSSLYPVLPK) are enriched in low complexity. Composition is skewed to pro residues over residues 210-223 (TNPP…PDPS) and 233-246 (EPPP…PPPS). Basic and acidic residues predominate over residues 494-511 (ETPEEREERLWQRQEERD).

Post-translationally, glycosylated by host. In terms of processing, cleaved by host near the middle of the molecule, releasing the c-terminal half containing capsid and nucleoprotein domains op GAG.

It localises to the host cell membrane. In terms of biological role, plays a role in viral particle release. Presumably acts by facilitating the fission of the virion bud at the cell surface. This Feline sarcoma virus (strain McDonough) protein is Glyco-Gag protein.